We begin with the raw amino-acid sequence, 185 residues long: Acireductone dioxygenase (185 aa).

The Fe(2+) site is built by His-97, His-99, Glu-103, and His-141. Residues His-97, His-99, Glu-103, and His-141 each contribute to the Ni(2+) site.

This sequence belongs to the acireductone dioxygenase (ARD) family. In terms of assembly, monomer. Fe(2+) is required as a cofactor. The cofactor is Ni(2+).

The enzyme catalyses 1,2-dihydroxy-5-(methylsulfanyl)pent-1-en-3-one + O2 = 3-(methylsulfanyl)propanoate + CO + formate + 2 H(+). It carries out the reaction 1,2-dihydroxy-5-(methylsulfanyl)pent-1-en-3-one + O2 = 4-methylsulfanyl-2-oxobutanoate + formate + 2 H(+). It functions in the pathway amino-acid biosynthesis; L-methionine biosynthesis via salvage pathway; L-methionine from S-methyl-5-thio-alpha-D-ribose 1-phosphate: step 5/6. Its function is as follows. Catalyzes 2 different reactions between oxygen and the acireductone 1,2-dihydroxy-3-keto-5-methylthiopentene (DHK-MTPene) depending upon the metal bound in the active site. Fe-containing acireductone dioxygenase (Fe-ARD) produces formate and 2-keto-4-methylthiobutyrate (KMTB), the alpha-ketoacid precursor of methionine in the methionine recycle pathway. Ni-containing acireductone dioxygenase (Ni-ARD) produces methylthiopropionate, carbon monoxide and formate, and does not lie on the methionine recycle pathway. The sequence is that of Acireductone dioxygenase from Stenotrophomonas maltophilia (strain K279a).